The primary structure comprises 775 residues: Coiled-coil domain-containing protein 33 (775 aa).

2 disordered regions span residues 1 to 23 (MGRQKTKVPEEPQDRLDTSLDPY) and 68 to 87 (EANNHSPQARTSVTSEPTRA). The segment covering 7-18 (KVPEEPQDRLDT) has biased composition (basic and acidic residues). The C2 domain maps to 12-141 (PQDRLDTSLD…RAFHPYHFEL (130 aa)). A compositionally biased stretch (polar residues) spans 71–84 (NHSPQARTSVTSEP). Coiled coils occupy residues 414-561 (VEMN…ERKE) and 672-715 (DKFS…LQEQ). Residues 735 to 775 (RSQGSTTPRQNLKDEGYPGNIERPLQTHLTPGTRDIRHHLR) form a disordered region.

In Rattus norvegicus (Rat), this protein is Coiled-coil domain-containing protein 33 (Ccdc33).